The sequence spans 217 residues: UPF0502 protein VFMJ11_A0613 (217 aa).

Belongs to the UPF0502 family.

The chain is UPF0502 protein VFMJ11_A0613 from Aliivibrio fischeri (strain MJ11) (Vibrio fischeri).